Here is a 299-residue protein sequence, read N- to C-terminus: Taste receptor type 2 member 1 (299 aa).

At 1-9 (MLESHLIIH) the chain is on the extracellular side. A helical transmembrane segment spans residues 10-30 (FLLAVIQFLLGTFTNGIIVVV). Residues 31–55 (NGIDLIKHRKMAPLDLLLSCLAVSR) lie on the Cytoplasmic side of the membrane. A helical transmembrane segment spans residues 56–76 (IFLQLFIFYVNVIVIFFIEFI). Residues 77–81 (MCSEN) are Extracellular-facing. A helical transmembrane segment spans residues 82–102 (CAILLFINELELWLATWLGVF). The Cytoplasmic portion of the chain corresponds to 103 to 124 (YCAKVASVPHPLFIWLKMKISK). A helical membrane pass occupies residues 125–145 (LVPWMILGSLLYVSMTCVFHS). The Extracellular segment spans residues 146–178 (KYAGFMVPYFLRNFFSQNATIQKEDTPAIQIFS). An N-linked (GlcNAc...) asparagine glycan is attached at Asn-163. The chain crosses the membrane as a helical span at residues 179–199 (FVAEFLVPLLIFLVAVLLLIF). Residues 200-222 (SLGRHTRQMRNTVAGSRVPGRGA) lie on the Cytoplasmic side of the membrane. The chain crosses the membrane as a helical span at residues 223–243 (PISALLSILSFVILYFSHCMI). Over 244-257 (KVFLSSLKFHVRSF) the chain is Extracellular. Residues 258 to 278 (ILPFFILVIGIYPSGHSLILI) traverse the membrane as a helical segment. At 279 to 299 (LGNXKLKQNAKKFLLHSKCCQ) the chain is on the cytoplasmic side.

This sequence belongs to the G-protein coupled receptor T2R family.

It is found in the membrane. Functionally, receptor that may play a role in the perception of bitterness and is gustducin-linked. May play a role in sensing the chemical composition of the gastrointestinal content. The activity of this receptor may stimulate alpha gustducin, mediate PLC-beta-2 activation and lead to the gating of TRPM5. This is Taste receptor type 2 member 1 (TAS2R1) from Pongo pygmaeus (Bornean orangutan).